Consider the following 196-residue polypeptide: Neuropeptide prohormone-4 (196 aa).

The first 25 residues, 1-25 (MSSPLRMDVTFLLAAIAVTWVCGLK), serve as a signal peptide directing secretion. In terms of domain architecture, LDL-receptor class A spans 50 to 90 (DCDIASPFKCEESPTCLRLFQVCNGRWDCEHGSDEDNALCA). Intrachain disulfides connect C51/C65, C59/C78, and C72/C89.

As to expression, expressed by the venom duct.

Its subcellular location is the secreted. The polypeptide is Neuropeptide prohormone-4 (Conus victoriae (Queen Victoria cone)).